Consider the following 264-residue polypeptide: Ribosomal protein L11 methyltransferase (264 aa).

S-adenosyl-L-methionine is bound by residues T116, G137, D159, and N200.

Belongs to the methyltransferase superfamily. PrmA family.

It localises to the cytoplasm. The enzyme catalyses L-lysyl-[protein] + 3 S-adenosyl-L-methionine = N(6),N(6),N(6)-trimethyl-L-lysyl-[protein] + 3 S-adenosyl-L-homocysteine + 3 H(+). Its function is as follows. Methylates ribosomal protein L11. The protein is Ribosomal protein L11 methyltransferase of Thermotoga neapolitana (strain ATCC 49049 / DSM 4359 / NBRC 107923 / NS-E).